The chain runs to 476 residues: Sulfate adenylyltransferase subunit 1 (476 aa).

One can recognise a tr-type G domain in the interval 24–238 (KSLLRFLTCG…ELLEYVDIDR (215 aa)). A G1 region spans residues 33–40 (GSVDDGKS). 33-40 (GSVDDGKS) provides a ligand contact to GTP. Residues 91-95 (GITID) form a G2 region. The segment at 112–115 (DTPG) is G3. GTP-binding positions include 112-116 (DTPGH) and 167-170 (NKMD). Residues 167 to 170 (NKMD) are G4. The interval 205-207 (SAL) is G5.

This sequence belongs to the TRAFAC class translation factor GTPase superfamily. Classic translation factor GTPase family. CysN/NodQ subfamily. As to quaternary structure, heterodimer composed of CysD, the smaller subunit, and CysN.

It catalyses the reaction sulfate + ATP + H(+) = adenosine 5'-phosphosulfate + diphosphate. It functions in the pathway sulfur metabolism; hydrogen sulfide biosynthesis; sulfite from sulfate: step 1/3. With CysD forms the ATP sulfurylase (ATPS) that catalyzes the adenylation of sulfate producing adenosine 5'-phosphosulfate (APS) and diphosphate, the first enzymatic step in sulfur assimilation pathway. APS synthesis involves the formation of a high-energy phosphoric-sulfuric acid anhydride bond driven by GTP hydrolysis by CysN coupled to ATP hydrolysis by CysD. The chain is Sulfate adenylyltransferase subunit 1 from Vibrio cholerae serotype O1 (strain M66-2).